Reading from the N-terminus, the 623-residue chain is Endoglucanase 12 (623 aa).

Residues 1–73 lie on the Cytoplasmic side of the membrane; that stretch reads MYSANHWGGS…LGCVVVKRKL (73 aa). The chain crosses the membrane as a helical; Signal-anchor for type II membrane protein span at residues 74 to 94; sequence LWWVLWTLLAAFILIGLPVII. Residues 95 to 623 are Extracellular-facing; it reads AKSIPKKKPH…TPPPPSKWKP (529 aa). Asp166 serves as the catalytic Nucleophile. N-linked (GlcNAc...) asparagine glycans are attached at residues Asn217, Asn236, Asn324, Asn345, Asn408, and Asn425. Catalysis depends on residues His513, Asp561, and Glu570.

The protein belongs to the glycosyl hydrolase 9 (cellulase E) family. As to expression, ubiquitous.

Its subcellular location is the membrane. The catalysed reaction is Endohydrolysis of (1-&gt;4)-beta-D-glucosidic linkages in cellulose, lichenin and cereal beta-D-glucans.. This Oryza sativa subsp. japonica (Rice) protein is Endoglucanase 12 (GLU3).